A 604-amino-acid chain; its full sequence is Glutamine--fructose-6-phosphate aminotransferase [isomerizing] (604 aa).

The active-site Nucleophile; for GATase activity is C2. A Glutamine amidotransferase type-2 domain is found at 2 to 219 (CGIMGAVSER…EGDSACVTTQ (218 aa)). SIS domains follow at residues 279 to 427 (LRAS…DNRA) and 454 to 594 (LASL…VDQP). The active-site For Fru-6P isomerization activity is K599.

Homodimer.

It localises to the cytoplasm. The enzyme catalyses D-fructose 6-phosphate + L-glutamine = D-glucosamine 6-phosphate + L-glutamate. Catalyzes the first step in hexosamine metabolism, converting fructose-6P into glucosamine-6P using glutamine as a nitrogen source. In Legionella pneumophila subsp. pneumophila (strain Philadelphia 1 / ATCC 33152 / DSM 7513), this protein is Glutamine--fructose-6-phosphate aminotransferase [isomerizing].